We begin with the raw amino-acid sequence, 790 residues long: Sorting nexin mvp1 (790 aa).

2 stretches are compositionally biased toward polar residues: residues 1 to 10 and 20 to 40; these read MSLFGSSPPN and KTAN…TRSG. Disordered regions lie at residues 1–62, 215–342, and 373–406; these read MSLF…RKQR, PNLS…SIHN, and AITG…HVRS. Over residues 225–240 the composition is skewed to pro residues; that stretch reads PQRPVTPPKAPTPSPP. Residues 241–252 show a composition bias toward low complexity; the sequence is KQQQQQQHQPPT. Residues 269–283 are compositionally biased toward basic and acidic residues; that stretch reads DLHKGHNHGPLEHST. Residues 297 to 319 show a composition bias toward polar residues; that stretch reads NDLNGNDAVSYSTSPEVTTTSSA. 2 stretches are compositionally biased toward low complexity: residues 324–339 and 386–400; these read TTST…GPSS and QSVS…PNRS. Residues 411 to 525 form the PX domain; sequence EENILVTLMP…IMFLTVPTEL (115 aa). The a 1,2-diacyl-sn-glycero-3-phospho-(1D-myo-inositol-3-phosphate) site is built by Arg447, Ser449, Lys473, and Arg492.

Belongs to the sorting nexin family.

It is found in the cytoplasm. It localises to the membrane. Required for vacuolar protein sorting. The protein is Sorting nexin mvp1 (vsp-1) of Neurospora crassa (strain ATCC 24698 / 74-OR23-1A / CBS 708.71 / DSM 1257 / FGSC 987).